The chain runs to 488 residues: Glutamyl-tRNA(Gln) amidotransferase subunit A (488 aa).

Residues Lys-78 and Ser-153 each act as charge relay system in the active site. Ser-177 acts as the Acyl-ester intermediate in catalysis.

Belongs to the amidase family. GatA subfamily. In terms of assembly, heterotrimer of A, B and C subunits.

The enzyme catalyses L-glutamyl-tRNA(Gln) + L-glutamine + ATP + H2O = L-glutaminyl-tRNA(Gln) + L-glutamate + ADP + phosphate + H(+). In terms of biological role, allows the formation of correctly charged Gln-tRNA(Gln) through the transamidation of misacylated Glu-tRNA(Gln) in organisms which lack glutaminyl-tRNA synthetase. The reaction takes place in the presence of glutamine and ATP through an activated gamma-phospho-Glu-tRNA(Gln). The chain is Glutamyl-tRNA(Gln) amidotransferase subunit A from Thermoanaerobacter pseudethanolicus (strain ATCC 33223 / 39E) (Clostridium thermohydrosulfuricum).